A 511-amino-acid polypeptide reads, in one-letter code: GMP synthase [glutamine-hydrolyzing] (511 aa).

Positions 5 to 195 (DILVLDFGSQ…AKYACNCDSV (191 aa)) constitute a Glutamine amidotransferase type-1 domain. Cys82 (nucleophile) is an active-site residue. Catalysis depends on residues His169 and Glu171. The 191-residue stretch at 196–386 (WNMGSFAKTQ…LGLSKDVVYR (191 aa)) folds into the GMPS ATP-PPase domain. 223–229 (SGGVDSS) contributes to the ATP binding site.

In terms of assembly, homodimer.

It catalyses the reaction XMP + L-glutamine + ATP + H2O = GMP + L-glutamate + AMP + diphosphate + 2 H(+). It functions in the pathway purine metabolism; GMP biosynthesis; GMP from XMP (L-Gln route): step 1/1. In terms of biological role, catalyzes the synthesis of GMP from XMP. This Campylobacter lari (strain RM2100 / D67 / ATCC BAA-1060) protein is GMP synthase [glutamine-hydrolyzing].